A 103-amino-acid polypeptide reads, in one-letter code: OMEGA-ectatommitoxin(02)-Rm1d (103 aa).

Residues 1–30 form the signal peptide; the sequence is MKDSYISIVIAYLMVTFILVSSMPIEGEKR. 3 disulfide bridges follow: Cys39-Cys54, Cys49-Cys70, and Cys72-Cys81. In terms of domain architecture, EGF-like spans 43–82; the sequence is LNDENYCFNGKCVHLVAQDEPGKPYYSCICDEFYIGERCG.

This sequence belongs to the EGF domain peptide family. Expressed by the venom gland.

The protein resides in the secreted. Ant peptide with probable defensive activity which acts as a potent agonist of the mammalian epidermal growth factor receptor (EGFR). Mimics, both structurally and functionally, vertebrate epidermal growth factor (EGF) peptide hormones. In vivo, intraplantar injection in mice causes long-lasting (several days) hypersensitivity of the injected paw to both mechanical and thermal stimuli. Its long-lasting effect is unusual for venom toxins whose effects are usually immediate. One possible explanation is that it would reduce the duration of a nest attack, discourage future attacks, or enhance the actions of subsequent exposure to other pain-inducing venom peptides. The sequence is that of OMEGA-ectatommitoxin(02)-Rm1d from Rhytidoponera metallica (Australian green-headed ant).